We begin with the raw amino-acid sequence, 366 residues long: Ribosomal RNA large subunit methyltransferase M (366 aa).

S-adenosyl-L-methionine is bound by residues Ser188, 221 to 224 (CPGG), Asp240, Asp260, and Asp277. Residue Lys306 is the Proton acceptor of the active site.

The protein belongs to the class I-like SAM-binding methyltransferase superfamily. RNA methyltransferase RlmE family. RlmM subfamily. Monomer.

It is found in the cytoplasm. It carries out the reaction cytidine(2498) in 23S rRNA + S-adenosyl-L-methionine = 2'-O-methylcytidine(2498) in 23S rRNA + S-adenosyl-L-homocysteine + H(+). Catalyzes the 2'-O-methylation at nucleotide C2498 in 23S rRNA. This is Ribosomal RNA large subunit methyltransferase M from Klebsiella pneumoniae (strain 342).